The primary structure comprises 395 residues: Phosphoglycerate kinase (395 aa).

Residues 22-24, Arg37, 60-63, Arg116, and Arg149 each bind substrate; these read DLN and HFGR. ATP contacts are provided by residues Lys199, Glu322, and 352-355; that span reads GGDT.

The protein belongs to the phosphoglycerate kinase family. As to quaternary structure, monomer.

It localises to the cytoplasm. It catalyses the reaction (2R)-3-phosphoglycerate + ATP = (2R)-3-phospho-glyceroyl phosphate + ADP. It functions in the pathway carbohydrate degradation; glycolysis; pyruvate from D-glyceraldehyde 3-phosphate: step 2/5. This is Phosphoglycerate kinase from Novosphingobium aromaticivorans (strain ATCC 700278 / DSM 12444 / CCUG 56034 / CIP 105152 / NBRC 16084 / F199).